We begin with the raw amino-acid sequence, 518 residues long: Nitrogenase iron-iron protein alpha chain (518 aa).

Cys-49, Cys-75, and Cys-138 together coordinate [8Fe-7S] cluster. [8Fe-9S-C-homocitryl] cluster contacts are provided by Cys-257 and His-423.

The protein belongs to the NifD/NifK/NifE/NifN family. In terms of assembly, hexamer of two alpha, two beta, and two delta chains. It depends on [8Fe-7S] cluster as a cofactor. [8Fe-9S-C-homocitryl] cluster serves as cofactor.

The catalysed reaction is N2 + 8 reduced [2Fe-2S]-[ferredoxin] + 16 ATP + 16 H2O = H2 + 8 oxidized [2Fe-2S]-[ferredoxin] + 2 NH4(+) + 16 ADP + 16 phosphate + 6 H(+). This iron-iron protein is part of the nitrogenase complex that catalyzes the key enzymatic reactions in nitrogen fixation. Other nitrogenase complexes utilize a molybdenum-iron protein or a vanadium-iron protein. The sequence is that of Nitrogenase iron-iron protein alpha chain (anfD) from Azotobacter vinelandii.